A 256-amino-acid chain; its full sequence is MPVALRVVPCLDVDGGRVVKGVNFLDLRDAGDPVELARRYDADGADEITFLDVSASTQGRATTLEMVSATAEQVFVPLTVGGGVRAVADVEALLRAGADKVGVNTAAIARPELLTEIAQHYGNQVLVLSVDARRCPDGVVTDSGFEVTTHGGRTGTGIDAVEWAAEATSRGAGEVLLNSIDADGTTAGFDVEMIEAVRAVVDTPLVASGGAGTVEDFVAAARAGADAVLAASVFHYGTLTISEVKAALRDAGFEVR.

Active-site residues include Asp12 and Asp131.

Belongs to the HisA/HisF family. In terms of assembly, heterodimer of HisH and HisF.

The protein localises to the cytoplasm. It catalyses the reaction 5-[(5-phospho-1-deoxy-D-ribulos-1-ylimino)methylamino]-1-(5-phospho-beta-D-ribosyl)imidazole-4-carboxamide + L-glutamine = D-erythro-1-(imidazol-4-yl)glycerol 3-phosphate + 5-amino-1-(5-phospho-beta-D-ribosyl)imidazole-4-carboxamide + L-glutamate + H(+). It functions in the pathway amino-acid biosynthesis; L-histidine biosynthesis; L-histidine from 5-phospho-alpha-D-ribose 1-diphosphate: step 5/9. In terms of biological role, IGPS catalyzes the conversion of PRFAR and glutamine to IGP, AICAR and glutamate. The HisF subunit catalyzes the cyclization activity that produces IGP and AICAR from PRFAR using the ammonia provided by the HisH subunit. This chain is Imidazole glycerol phosphate synthase subunit HisF, found in Beutenbergia cavernae (strain ATCC BAA-8 / DSM 12333 / CCUG 43141 / JCM 11478 / NBRC 16432 / NCIMB 13614 / HKI 0122).